The following is a 461-amino-acid chain: Photosystem II CP43 reaction center protein (461 aa).

The propeptide occupies 1–2; the sequence is ME. N-acetylthreonine is present on Thr-3. Thr-3 carries the post-translational modification Phosphothreonine. 5 helical membrane passes run 57–81, 122–143, 166–188, 243–263, and 279–300; these read LFEVAHFVPEKPMYEQGLILLPHLA, LLGPETLEESFPFFGYVWKDRN, KALYFGGVYDTWAPGGGDVRKIT, KPFAWARRALVWSGEAYLSYS, and WFNNTAYPSEFYGPTGPEASQA. Glu-355 serves as a coordination point for [CaMn4O5] cluster. A helical membrane pass occupies residues 435 to 459; the sequence is RARAAAAGFEKGIDRDFEPVLSMTP.

It belongs to the PsbB/PsbC family. PsbC subfamily. As to quaternary structure, PSII is composed of 1 copy each of membrane proteins PsbA, PsbB, PsbC, PsbD, PsbE, PsbF, PsbH, PsbI, PsbJ, PsbK, PsbL, PsbM, PsbT, PsbX, PsbY, PsbZ, Psb30/Ycf12, at least 3 peripheral proteins of the oxygen-evolving complex and a large number of cofactors. It forms dimeric complexes. Binds multiple chlorophylls and provides some of the ligands for the Ca-4Mn-5O cluster of the oxygen-evolving complex. It may also provide a ligand for a Cl- that is required for oxygen evolution. PSII binds additional chlorophylls, carotenoids and specific lipids. serves as cofactor.

It is found in the plastid. Its subcellular location is the chloroplast thylakoid membrane. Functionally, one of the components of the core complex of photosystem II (PSII). It binds chlorophyll and helps catalyze the primary light-induced photochemical processes of PSII. PSII is a light-driven water:plastoquinone oxidoreductase, using light energy to abstract electrons from H(2)O, generating O(2) and a proton gradient subsequently used for ATP formation. The polypeptide is Photosystem II CP43 reaction center protein (Platanus occidentalis (Sycamore)).